We begin with the raw amino-acid sequence, 155 residues long: MAKLAVIRIRGRVNVKRPVRDTLAMLRLHRVNHCVIVDDTPSYLGMLQKAKDYITWGEINAETLAKLIRKRGRLIGNKPVTDEYVKEKLGMTIEEFAQKVVNGEMSLKDLPNLKPVFRLHPPRGGFRGSKKRSFKEGGALGYRGEKINELIERML.

The protein belongs to the universal ribosomal protein uL30 family. In terms of assembly, part of the 50S ribosomal subunit.

This chain is Large ribosomal subunit protein uL30, found in Pyrococcus furiosus (strain ATCC 43587 / DSM 3638 / JCM 8422 / Vc1).